The chain runs to 1045 residues: Elongation factor 3 (1045 aa).

HEAT repeat units follow at residues 5–42, 43–85, 86–123, 125–162, 166–203, 205–241, and 242–279; these read DQSLKVLEELFKNLSVATADNRVEAAQEVASFLNGNII, EHDI…PSVE, PFVITLVPEICAKAGDKDKDVQAVASKTLVAISKAINP, AIKAYLPHLTKSLETTNKWQEKVSVLAAISALVDAAKE, LRMPELIPVLSETMWDTKKEVKEAATATMTKATETVDN, DIERFIPQLISCIADPKQVPETVHLLGATTFVAEVTP, and ATLSIMVPLLSRGLAERETSIKRKAAVIIDNMCKLVED. ADP is bound by residues Ile-42, His-44, and Ser-83. ADP contacts are provided by Thr-392, His-396, and Glu-397. ABC transporter domains follow at residues 426-641 and 667-993; these read DEGE…YYEL and VKVS…KKED. The ADP site is built by Asn-703, Glu-922, Asn-925, and His-951. The disordered stretch occupies residues 974-1045; the sequence is SGHNWVSGQG…AYVSSDDEDF (72 aa). Basic residues predominate over residues 1007-1031; that stretch reads GGKKKKKLSSAELRKKKKERMKKKK.

The protein belongs to the ABC transporter superfamily. ABCF family. EF3 subfamily. As to quaternary structure, monomer.

It localises to the cytoplasm. It is found in the cytosol. The enzyme catalyses ATP + H2O = ADP + phosphate + H(+). It functions in the pathway protein biosynthesis; polypeptide chain elongation. Functionally, ribosome-dependent ATPase that functions in cytoplasmic translation elongation. Required for the ATP-dependent release of deacylated tRNA from the ribosomal E-site during protein biosynthesis. Stimulates the eEF1A-dependent binding of aminoacyl-tRNA to the ribosomal A-site, which has reduced affinity for tRNA as long as the E-site is occupied. Assists translation termination by stimulating the release of nascent protein from the ribosome by release factors. The chain is Elongation factor 3 (TEF3) from Candida glabrata (strain ATCC 2001 / BCRC 20586 / JCM 3761 / NBRC 0622 / NRRL Y-65 / CBS 138) (Yeast).